Reading from the N-terminus, the 394-residue chain is Myb-related protein 2 (394 aa).

An HTH myb-type domain is found at 42 to 102 (TDAKPRLKWT…HLQKYRLSKN (61 aa)). A DNA-binding region (H-T-H motif) is located at residues 73 to 98 (PKTIMKVMGIPGLTLYHLKSHLQKYR). The tract at residues 148–168 (GEALQMQIEVQRRLHEQLEVQ) is coiled coil. Positions 161 to 166 (LHEQLE) match the LHEQLE motif. Positions 338–363 (LHGHKSQHQQGNNEDHKLETRNRKGM) are disordered. The span at 350–363 (NEDHKLETRNRKGM) shows a compositional bias: basic and acidic residues.

Belongs to the MYB-CC family. Isoform 1: Homodimer. Isoform 3: Does not form homodimer. As to expression, expressed in phloem and/or cambium.

It localises to the nucleus. Transcriptional activator that may activate the transcription of specific genes involved in nitrogen uptake or assimilation. Acts redundantly with MYR1 as a repressor of flowering and organ elongation under decreased light intensity. Represses gibberellic acid (GA)-dependent responses and affects levels of bioactive GA. The protein is Myb-related protein 2 of Arabidopsis thaliana (Mouse-ear cress).